The primary structure comprises 442 residues: Tyrosine--tRNA ligase (442 aa).

Tyr-55 serves as a coordination point for L-tyrosine. A 'HIGH' region motif is present at residues 60 to 69; it reads PTAPSLHLGN. L-tyrosine contacts are provided by Tyr-190 and Gln-194. The 'KMSKS' region signature appears at 250-254; that stretch reads KFGKS. Lys-253 lines the ATP pocket. In terms of domain architecture, S4 RNA-binding spans 373-438; that stretch reads VAIAQALVDT…GKKTLAGVFV (66 aa).

This sequence belongs to the class-I aminoacyl-tRNA synthetase family. TyrS type 1 subfamily. As to quaternary structure, homodimer.

It is found in the cytoplasm. The catalysed reaction is tRNA(Tyr) + L-tyrosine + ATP = L-tyrosyl-tRNA(Tyr) + AMP + diphosphate + H(+). Functionally, catalyzes the attachment of tyrosine to tRNA(Tyr) in a two-step reaction: tyrosine is first activated by ATP to form Tyr-AMP and then transferred to the acceptor end of tRNA(Tyr). The polypeptide is Tyrosine--tRNA ligase (Leifsonia xyli subsp. xyli (strain CTCB07)).